A 400-amino-acid polypeptide reads, in one-letter code: Nicotinate phosphoribosyltransferase (400 aa).

Position 220 is a phosphohistidine; by autocatalysis (His-220).

The protein belongs to the NAPRTase family. Post-translationally, transiently phosphorylated on a His residue during the reaction cycle. Phosphorylation strongly increases the affinity for substrates and increases the rate of nicotinate D-ribonucleotide production. Dephosphorylation regenerates the low-affinity form of the enzyme, leading to product release.

The enzyme catalyses nicotinate + 5-phospho-alpha-D-ribose 1-diphosphate + ATP + H2O = nicotinate beta-D-ribonucleotide + ADP + phosphate + diphosphate. It participates in cofactor biosynthesis; NAD(+) biosynthesis; nicotinate D-ribonucleotide from nicotinate: step 1/1. In terms of biological role, catalyzes the synthesis of beta-nicotinate D-ribonucleotide from nicotinate and 5-phospho-D-ribose 1-phosphate at the expense of ATP. The chain is Nicotinate phosphoribosyltransferase from Salmonella agona (strain SL483).